Reading from the N-terminus, the 288-residue chain is Phenazine biosynthesis-like domain-containing protein 1 (288 aa).

Glu46 is an active-site residue.

This sequence belongs to the PhzF family.

The sequence is that of Phenazine biosynthesis-like domain-containing protein 1 (Pbld1) from Mus musculus (Mouse).